Consider the following 304-residue polypeptide: Glycine--tRNA ligase alpha subunit (304 aa).

Belongs to the class-II aminoacyl-tRNA synthetase family. In terms of assembly, tetramer of two alpha and two beta subunits.

The protein resides in the cytoplasm. The enzyme catalyses tRNA(Gly) + glycine + ATP = glycyl-tRNA(Gly) + AMP + diphosphate. In Pectobacterium atrosepticum (strain SCRI 1043 / ATCC BAA-672) (Erwinia carotovora subsp. atroseptica), this protein is Glycine--tRNA ligase alpha subunit.